The sequence spans 614 residues: 1-deoxy-D-xylulose-5-phosphate synthase (614 aa).

Thiamine diphosphate-binding positions include His-74 and 115-117 (AHS). Asp-146 contributes to the Mg(2+) binding site. Thiamine diphosphate-binding positions include 147–148 (GA), Asn-175, Tyr-282, and Glu-363. Residue Asn-175 coordinates Mg(2+).

Belongs to the transketolase family. DXPS subfamily. Homodimer. The cofactor is Mg(2+). It depends on thiamine diphosphate as a cofactor.

The catalysed reaction is D-glyceraldehyde 3-phosphate + pyruvate + H(+) = 1-deoxy-D-xylulose 5-phosphate + CO2. Its pathway is metabolic intermediate biosynthesis; 1-deoxy-D-xylulose 5-phosphate biosynthesis; 1-deoxy-D-xylulose 5-phosphate from D-glyceraldehyde 3-phosphate and pyruvate: step 1/1. In terms of biological role, catalyzes the acyloin condensation reaction between C atoms 2 and 3 of pyruvate and glyceraldehyde 3-phosphate to yield 1-deoxy-D-xylulose-5-phosphate (DXP). The sequence is that of 1-deoxy-D-xylulose-5-phosphate synthase from Nitrosospira multiformis (strain ATCC 25196 / NCIMB 11849 / C 71).